A 192-amino-acid chain; its full sequence is MGNISSNISAFQSLHIVMLGLDSAGKTTVLYRLKFNEFVNTVPTIGFNTEKIKLSNGTAKGISCHFWDVGGQEKLRPLWKSYSRCTDGIIYVVDSVDVDRLEEAKTELHKVTKFAENQGTPLLVIANKQDLPKSLPVAEIEKQLALHELIPATTYHVQPACAIIGEGLTEGMDKLYEMILKRRKSLKQKKKR.

Residue glycine 2 is the site of N-myristoyl glycine attachment. GTP contacts are provided by residues 20 to 27, 68 to 72, and 127 to 130; these read GLDSAGKT, DVGGQ, and NKQD.

It belongs to the small GTPase superfamily. Arf family. In terms of assembly, interacts with CYTH2. Interacts with alpha tubulin; interaction is independent on the ARL4C GTP or GDP binding status. As to expression, expressed in several tumor cell lines (at protein level). Expressed in lung, brain, leukocytes and placenta.

The protein localises to the cell projection. The protein resides in the filopodium. Its subcellular location is the cell membrane. It localises to the cytoplasm. Functionally, small GTP-binding protein which cycles between an inactive GDP-bound and an active GTP-bound form, and the rate of cycling is regulated by guanine nucleotide exchange factors (GEF) and GTPase-activating proteins (GAP). GTP-binding protein that does not act as an allosteric activator of the cholera toxin catalytic subunit. May be involved in transport between a perinuclear compartment and the plasma membrane, apparently linked to the ABCA1-mediated cholesterol secretion pathway. Recruits CYTH1, CYTH2, CYTH3 and CYTH4 to the plasma membrane in the GDP-bound form. Regulates the microtubule-dependent intracellular vesicular transport from early endosome to recycling endosome process. The polypeptide is ADP-ribosylation factor-like protein 4C (ARL4C) (Homo sapiens (Human)).